Reading from the N-terminus, the 437-residue chain is Beta-1,3-galactosyl-O-glycosyl-glycoprotein beta-1,6-N-acetylglucosaminyltransferase 3 (437 aa).

At 1–6 (MVSWRR) the chain is on the cytoplasmic side. Residues 7–27 (FCWHYHGWTLGCYMLLAIIAL) traverse the membrane as a helical; Signal-anchor for type II membrane protein segment. Over 28-437 (KLSLRLKCDF…RHKAIYGTEL (410 aa)) the chain is Lumenal. Intrachain disulfides connect Cys-70–Cys-227, Cys-161–Cys-381, Cys-182–Cys-209, and Cys-390–Cys-422. N-linked (GlcNAc...) asparagine glycosylation is present at Asn-288.

Belongs to the glycosyltransferase 14 family. N-glycosylated.

It is found in the golgi apparatus membrane. The enzyme catalyses a 3-O-[beta-D-galactosyl-(1-&gt;3)-N-acetyl-alpha-D-galactosaminyl]-L-seryl-[protein] + UDP-N-acetyl-alpha-D-glucosamine = 3-O-{beta-D-galactosyl-(1-&gt;3)-[N-acetyl-beta-D-glucosaminyl-(1-&gt;6)]-N-acetyl-alpha-D-galactosaminyl}-L-seryl-[protein] + UDP + H(+). The catalysed reaction is a 3-O-[beta-D-galactosyl-(1-&gt;3)-N-acetyl-alpha-D-galactosaminyl]-L-threonyl-[protein] + UDP-N-acetyl-alpha-D-glucosamine = a 3-O-{beta-D-galactosyl-(1-&gt;3)-[N-acetyl-beta-D-glucosaminyl-(1-&gt;6)]-N-acetyl-alpha-D-galactosaminyl}-L-threonyl-[protein] + UDP + H(+). It catalyses the reaction a beta-D-Gal-(1-&gt;4)-beta-D-GlcNAc-(1-&gt;3)-beta-D-Gal-(1-&gt;4)-beta-D-GlcNAc derivative + UDP-N-acetyl-alpha-D-glucosamine = a beta-D-Gal-(1-&gt;4)-beta-D-GlcNAc-(1-&gt;3)-[beta-D-GlcNAc-(1-&gt;6)]-beta-D-Gal-(1-&gt;4)-N-acetyl-beta-D-glucosaminyl derivative + UDP + H(+). It carries out the reaction 3-O-[N-acetyl-beta-D-glucosaminyl-(1-&gt;3)-N-acetyl-alpha-D-galactosaminyl]-L-seryl-[protein] + UDP-N-acetyl-alpha-D-glucosamine = 3-O-[N-acetyl-beta-D-glucosaminyl-(1-&gt;3)-[N-acetyl-beta-D-glucosaminyl-(1-&gt;6)]-N-acetyl-alpha-D-galactosaminyl]-L-seryl-[protein] + UDP + H(+). The enzyme catalyses a 3-O-[N-acetyl-beta-D-glucosaminyl-(1-&gt;3)-N-acetyl-alpha-D-galactosaminyl]-L-threonyl-[protein] + UDP-N-acetyl-alpha-D-glucosamine = 3-O-[N-acetyl-beta-D-glucosaminyl-(1-&gt;3)-[N-acetyl-beta-D-glucosaminyl-(1-&gt;6)]-N-acetyl-alpha-D-galactosaminyl]-L-threonyl-[protein] + UDP + H(+). Its pathway is protein modification; protein glycosylation. In terms of biological role, glycosyltransferase that can synthesize all known mucin beta 6 N-acetylglucosaminides. Mediates core 2 and core 4 O-glycan branching, 2 important steps in mucin-type biosynthesis. Also has I-branching enzyme activity by converting linear into branched poly-N-acetyllactosaminoglycans, leading to introduce the blood group I antigen during embryonic development. This Rattus norvegicus (Rat) protein is Beta-1,3-galactosyl-O-glycosyl-glycoprotein beta-1,6-N-acetylglucosaminyltransferase 3 (Gcnt3).